Reading from the N-terminus, the 628-residue chain is DNA ligase (628 aa).

NAD(+)-binding positions include 36 to 40 (DVEYD), 85 to 86 (SL), and E117. K119 acts as the N6-AMP-lysine intermediate in catalysis. The NAD(+) site is built by R140, E174, K309, and K333. Zn(2+) contacts are provided by C427, C430, C446, and C452.

This sequence belongs to the NAD-dependent DNA ligase family. LigA subfamily. It depends on Mg(2+) as a cofactor. The cofactor is Mn(2+).

The enzyme catalyses NAD(+) + (deoxyribonucleotide)n-3'-hydroxyl + 5'-phospho-(deoxyribonucleotide)m = (deoxyribonucleotide)n+m + AMP + beta-nicotinamide D-nucleotide.. DNA ligase that catalyzes the formation of phosphodiester linkages between 5'-phosphoryl and 3'-hydroxyl groups in double-stranded DNA using NAD as a coenzyme and as the energy source for the reaction. It is essential for DNA replication and repair of damaged DNA. The chain is DNA ligase from Tropheryma whipplei (strain TW08/27) (Whipple's bacillus).